Here is a 418-residue protein sequence, read N- to C-terminus: Gamma-glutamyl phosphate reductase (418 aa).

The protein belongs to the gamma-glutamyl phosphate reductase family.

It localises to the cytoplasm. It catalyses the reaction L-glutamate 5-semialdehyde + phosphate + NADP(+) = L-glutamyl 5-phosphate + NADPH + H(+). It functions in the pathway amino-acid biosynthesis; L-proline biosynthesis; L-glutamate 5-semialdehyde from L-glutamate: step 2/2. Its function is as follows. Catalyzes the NADPH-dependent reduction of L-glutamate 5-phosphate into L-glutamate 5-semialdehyde and phosphate. The product spontaneously undergoes cyclization to form 1-pyrroline-5-carboxylate. The protein is Gamma-glutamyl phosphate reductase of Desulfatibacillum aliphaticivorans.